Reading from the N-terminus, the 26-residue chain is Orexigenic neuropeptide 26RFa (26 aa).

Phenylalanine amide is present on Phe-26.

Brain.

It is found in the secreted. Its function is as follows. May have orexigenic activity. May promote aldosterone secretion by the adrenal gland. The chain is Orexigenic neuropeptide 26RFa from Pelophylax lessonae (Pool frog).